A 958-amino-acid chain; its full sequence is Coiled-coil domain-containing protein 187 (958 aa).

Over residues 116–132 (SSVSSGRMSGSSGGHES) the composition is skewed to low complexity. Disordered regions lie at residues 116–160 (SSVS…SDPR), 345–447 (ELTR…PRFF), 470–492 (QDIS…QRPW), and 510–602 (EPSP…KAQA). Composition is skewed to polar residues over residues 374–398 (LQST…NSSL) and 470–491 (QDIS…SQRP). A compositionally biased stretch (low complexity) spans 536–545 (SSPSSKGKSA). The stretch at 718–743 (KQARLQALETMAEALRQRVDILTTKL) forms a coiled coil. Residues 916 to 958 (EVKKEGLVTPWTTRSCGKGEPADRPWAGWSGGQGGLPWASSTA) are disordered.

This Mus musculus (Mouse) protein is Coiled-coil domain-containing protein 187.